The sequence spans 190 residues: RNA-binding protein OPG065 (190 aa).

A Z-binding domain is found at 5–70 (YIDERSDAEI…DIPPRWFMTT (66 aa)). The 68-residue stretch at 117-184 (NPVTIINEYC…AKLAVDKLLG (68 aa)) folds into the DRBM domain.

The protein belongs to the orthopoxvirus OPG065 family. As to quaternary structure, interacts with host G1P2/ISG15. Interacts with host EIF2AK2/PKR. Interacts with host ZBP1.

Its function is as follows. RNA-binding protein that plays a role in the inhibition of multiple cellular antiviral responses activated by double-stranded RNA (dsRNA), such as inhibition of PKR activation, necroptosis, and IFN-mediated antiviral activities. Recognizes and binds Z-RNA structures via its Z-binding domain and dsRNA via its DRBM domain: RNA-binding activity is required to escape host ZBP1-dependent necroptosis. Mechanistically, the Z-binding domain binds Z-RNAs that are produced during vaccinia virus infection, thereby competing with Z-RNA detection by host ZBP1, suppressing ZBP1-dependent necroptosis. Acts as a key inhibitor of the interferon response by blocking the phosphorylation and subsequent activation of IRF3 and IRF7 kinases that are required for interferon-alpha gene expression. Inhibits NF-kappa-B activation and the ubiquitin-like protein ISG15, which is an early antiviral protein. The binding with host ISG15 subsequently blocks host ISGylation. This is RNA-binding protein OPG065 (OPG065) from Homo sapiens (Human).